The chain runs to 521 residues: Adenosylhomocysteinase-like 1 (521 aa).

Residues 1 to 92 (MNNLADTVVV…EKVQKNSKGS (92 aa)) form a disordered region. Low complexity predominate over residues 54 to 73 (RSLSASSTDSFSSASYTGSS). Substrate is bound by residues D220 and E245. Position 246-248 (246-248 (SVT)) interacts with NAD(+). Residues K275 and D279 each contribute to the substrate site. NAD(+)-binding positions include 311-316 (GDVGKG), E332, 388-390 (MGH), N435, K515, 515-519 (KPNYY), and Y519.

It belongs to the adenosylhomocysteinase family. In terms of assembly, interacts with Ahcy; the interaction may negatively regulate Ahcy catalytic activity. It depends on NAD(+) as a cofactor.

In terms of biological role, might play a role in the regulation of methionine metabolism possibly by binding and inactivating Ahcy. The chain is Adenosylhomocysteinase-like 1 from Drosophila melanogaster (Fruit fly).